The primary structure comprises 326 residues: Vomeronasal type-1 receptor 94 (326 aa).

The Extracellular segment spans residues 1-32 (MSEILLFSPQPLFSYTMNKYSRLYTNSNIRNT). The helical transmembrane segment at 33–53 (FFSEIGIGIAANSLLLLFHIF) threads the bilayer. The Cytoplasmic portion of the chain corresponds to 54–65 (KFIRGQRSRLTD). Residues 66 to 86 (LPIGLLSLIHLLKLLMIAFIA) form a helical membrane-spanning segment. The Extracellular segment spans residues 87 to 110 (TDIFISWRGWDDIICKFLVYLYRS). An intrachain disulfide couples C101 to C188. Residues 111–130 (FRGLSLCTTCMLSVLQAITL) form a helical membrane-spanning segment. Residues 131-150 (SPRSSCLAKFKHKSPHHVSC) are Cytoplasmic-facing. The chain crosses the membrane as a helical span at residues 151–171 (AILSLSVLYMFISSHLLVSLI). Over 172 to 203 (ATPNLTTNVFMYVSESCSILPMSYLMQSMFST) the chain is Extracellular. Residue N175 is glycosylated (N-linked (GlcNAc...) asparagine). A helical transmembrane segment spans residues 204–224 (LLAIRDVFLISLMVLSTCYMV). Residues 225–254 (ALLCRHRKQTRHLQGTSLSPKASPEKKATH) are Cytoplasmic-facing. The chain crosses the membrane as a helical span at residues 255-275 (SILMLMSFFVLMSILDSIVSC). The Extracellular segment spans residues 276-285 (SRTMFLYDPT). The chain crosses the membrane as a helical span at residues 286–306 (SYAIQIFVSHIYATVSPFVFM). The Cytoplasmic portion of the chain corresponds to 307-326 (SNEKHIVNFLRSLCKRVINV).

The protein belongs to the G-protein coupled receptor 1 family.

The protein resides in the cell membrane. Its function is as follows. Putative pheromone receptor implicated in the regulation of social as well as reproductive behavior. This chain is Vomeronasal type-1 receptor 94 (Vom1r94), found in Rattus norvegicus (Rat).